The chain runs to 755 residues: 1,4-alpha-glucan branching enzyme GlgB (755 aa).

The active-site Nucleophile is the aspartate 431. Glutamate 484 (proton donor) is an active-site residue.

Belongs to the glycosyl hydrolase 13 family. GlgB subfamily. In terms of assembly, monomer.

The catalysed reaction is Transfers a segment of a (1-&gt;4)-alpha-D-glucan chain to a primary hydroxy group in a similar glucan chain.. The protein operates within glycan biosynthesis; glycogen biosynthesis. Its function is as follows. Catalyzes the formation of the alpha-1,6-glucosidic linkages in glycogen by scission of a 1,4-alpha-linked oligosaccharide from growing alpha-1,4-glucan chains and the subsequent attachment of the oligosaccharide to the alpha-1,6 position. The protein is 1,4-alpha-glucan branching enzyme GlgB of Prochlorococcus marinus (strain NATL2A).